The sequence spans 133 residues: FPRL1 inhibitory protein (133 aa).

Positions 1–28 (MKKNITKTIIASTVIAAGLLTQTNDAKA) are cleaved as a signal peptide.

The protein belongs to the CHIPS/FLIPr family.

It is found in the secreted. In terms of biological role, may be involved in countering the first line of host defense mechanisms. Impairs the leukocyte response to FPRL1 agonists by binding directly to host FPRL1. The chain is FPRL1 inhibitory protein (flr) from Staphylococcus aureus (strain Mu50 / ATCC 700699).